Reading from the N-terminus, the 64-residue chain is DNA gyrase inhibitor YacG (64 aa).

Zn(2+) is bound by residues Cys10, Cys13, Cys29, and Cys33.

It belongs to the DNA gyrase inhibitor YacG family. In terms of assembly, interacts with GyrB. The cofactor is Zn(2+).

Inhibits all the catalytic activities of DNA gyrase by preventing its interaction with DNA. Acts by binding directly to the C-terminal domain of GyrB, which probably disrupts DNA binding by the gyrase. The sequence is that of DNA gyrase inhibitor YacG from Pectobacterium carotovorum subsp. carotovorum (strain PC1).